The primary structure comprises 414 residues: Enolase (414 aa).

Residue glutamine 162 coordinates (2R)-2-phosphoglycerate. Glutamate 204 functions as the Proton donor in the catalytic mechanism. Mg(2+) contacts are provided by aspartate 239, glutamate 280, and aspartate 307. Positions 332, 361, 362, and 383 each coordinate (2R)-2-phosphoglycerate. The Proton acceptor role is filled by lysine 332.

The protein belongs to the enolase family. Requires Mg(2+) as cofactor.

The protein resides in the cytoplasm. Its subcellular location is the secreted. It localises to the cell surface. It catalyses the reaction (2R)-2-phosphoglycerate = phosphoenolpyruvate + H2O. It functions in the pathway carbohydrate degradation; glycolysis; pyruvate from D-glyceraldehyde 3-phosphate: step 4/5. In terms of biological role, catalyzes the reversible conversion of 2-phosphoglycerate (2-PG) into phosphoenolpyruvate (PEP). It is essential for the degradation of carbohydrates via glycolysis. This chain is Enolase, found in Campylobacter lari (strain RM2100 / D67 / ATCC BAA-1060).